The sequence spans 321 residues: Glyoxylate/hydroxypyruvate reductase B (321 aa).

Active-site residues include arginine 237 and glutamate 266. The active-site Proton donor is histidine 285.

It belongs to the D-isomer specific 2-hydroxyacid dehydrogenase family. GhrB subfamily. In terms of assembly, homodimer.

Its subcellular location is the cytoplasm. The catalysed reaction is glycolate + NADP(+) = glyoxylate + NADPH + H(+). It carries out the reaction (R)-glycerate + NAD(+) = 3-hydroxypyruvate + NADH + H(+). It catalyses the reaction (R)-glycerate + NADP(+) = 3-hydroxypyruvate + NADPH + H(+). Catalyzes the NADPH-dependent reduction of glyoxylate and hydroxypyruvate into glycolate and glycerate, respectively. The sequence is that of Glyoxylate/hydroxypyruvate reductase B from Erwinia tasmaniensis (strain DSM 17950 / CFBP 7177 / CIP 109463 / NCPPB 4357 / Et1/99).